The sequence spans 284 residues: UPF0354 protein SERP1303 (284 aa).

The protein belongs to the UPF0354 family.

This Staphylococcus epidermidis (strain ATCC 35984 / DSM 28319 / BCRC 17069 / CCUG 31568 / BM 3577 / RP62A) protein is UPF0354 protein SERP1303.